We begin with the raw amino-acid sequence, 301 residues long: GTPase Era (301 aa).

The Era-type G domain maps to tyrosine 7–glutamate 175. The interval glycine 15–serine 22 is G1. Glycine 15 to serine 22 contacts GTP. The segment at glutamine 41 to histidine 45 is G2. A G3 region spans residues aspartate 62–glycine 65. GTP-binding positions include aspartate 62–leucine 66 and asparagine 124–aspartate 127. Residues asparagine 124–aspartate 127 form a G4 region. The G5 stretch occupies residues isoleucine 154–alanine 156. Positions leucine 206 to serine 283 constitute a KH type-2 domain.

This sequence belongs to the TRAFAC class TrmE-Era-EngA-EngB-Septin-like GTPase superfamily. Era GTPase family. Monomer.

It is found in the cytoplasm. The protein localises to the cell inner membrane. Functionally, an essential GTPase that binds both GDP and GTP, with rapid nucleotide exchange. Plays a role in 16S rRNA processing and 30S ribosomal subunit biogenesis and possibly also in cell cycle regulation and energy metabolism. The sequence is that of GTPase Era from Escherichia coli O157:H7.